We begin with the raw amino-acid sequence, 311 residues long: Aspartate carbamoyltransferase catalytic subunit (311 aa).

Residues arginine 55 and threonine 56 each contribute to the carbamoyl phosphate site. Lysine 83 is an L-aspartate binding site. Carbamoyl phosphate contacts are provided by arginine 105, histidine 134, and glutamine 137. L-aspartate-binding residues include arginine 167 and arginine 226. Carbamoyl phosphate-binding residues include glycine 267 and proline 268.

It belongs to the aspartate/ornithine carbamoyltransferase superfamily. ATCase family. In terms of assembly, heterododecamer (2C3:3R2) of six catalytic PyrB chains organized as two trimers (C3), and six regulatory PyrI chains organized as three dimers (R2).

It catalyses the reaction carbamoyl phosphate + L-aspartate = N-carbamoyl-L-aspartate + phosphate + H(+). Its pathway is pyrimidine metabolism; UMP biosynthesis via de novo pathway; (S)-dihydroorotate from bicarbonate: step 2/3. In terms of biological role, catalyzes the condensation of carbamoyl phosphate and aspartate to form carbamoyl aspartate and inorganic phosphate, the committed step in the de novo pyrimidine nucleotide biosynthesis pathway. The polypeptide is Aspartate carbamoyltransferase catalytic subunit (Corynebacterium jeikeium (strain K411)).